The primary structure comprises 449 residues: F-box/LRR-repeat protein At3g60040 (449 aa).

Positions arginine 12–glutamine 64 constitute an F-box domain. LRR repeat units follow at residues leucine 161–threonine 188, phenylalanine 191–histidine 215, histidine 216–tyrosine 237, cysteine 239–histidine 263, glutamate 287–proline 312, and lysine 340–aspartate 365.

The protein is F-box/LRR-repeat protein At3g60040 of Arabidopsis thaliana (Mouse-ear cress).